A 139-amino-acid polypeptide reads, in one-letter code: Cytochrome c-type biogenesis protein CcmE (139 aa).

At 1-7 (MTKRQNR) the chain is on the cytoplasmic side. The helical; Signal-anchor for type II membrane protein transmembrane segment at 8-28 (MTLVALLVIGVSLTGYLGLKA) threads the bilayer. The Periplasmic segment spans residues 29-139 (FNENLLYFFS…ADALEKAKNK (111 aa)). The heme site is built by histidine 120 and tyrosine 124.

The protein belongs to the CcmE/CycJ family.

Its subcellular location is the cell inner membrane. Functionally, heme chaperone required for the biogenesis of c-type cytochromes. Transiently binds heme delivered by CcmC and transfers the heme to apo-cytochromes in a process facilitated by CcmF and CcmH. The chain is Cytochrome c-type biogenesis protein CcmE from Ruthia magnifica subsp. Calyptogena magnifica.